The sequence spans 227 residues: Cytochrome c oxidase subunit 2 (227 aa).

Residues 1-14 (MAYPFQLGLQDATS) lie on the Mitochondrial intermembrane side of the membrane. A helical transmembrane segment spans residues 15–45 (PIMEELTSFHDHTLMIVFLISSLVLYIILLM). Residues 46–59 (LTTKLTHTSTMDAQ) are Mitochondrial matrix-facing. The helical transmembrane segment at 60–87 (EVETIWTILPAVILILIALPSLRILYMM) threads the bilayer. At 88-227 (DEINNPALTV…HFENWSASMI (140 aa)) the chain is on the mitochondrial intermembrane side. The Cu cation site is built by His161, Cys196, Glu198, Cys200, His204, and Met207. Glu198 contributes to the Mg(2+) binding site.

It belongs to the cytochrome c oxidase subunit 2 family. In terms of assembly, component of the cytochrome c oxidase (complex IV, CIV), a multisubunit enzyme composed of 14 subunits. The complex is composed of a catalytic core of 3 subunits MT-CO1, MT-CO2 and MT-CO3, encoded in the mitochondrial DNA, and 11 supernumerary subunits COX4I, COX5A, COX5B, COX6A, COX6B, COX6C, COX7A, COX7B, COX7C, COX8 and NDUFA4, which are encoded in the nuclear genome. The complex exists as a monomer or a dimer and forms supercomplexes (SCs) in the inner mitochondrial membrane with NADH-ubiquinone oxidoreductase (complex I, CI) and ubiquinol-cytochrome c oxidoreductase (cytochrome b-c1 complex, complex III, CIII), resulting in different assemblies (supercomplex SCI(1)III(2)IV(1) and megacomplex MCI(2)III(2)IV(2)). Found in a complex with TMEM177, COA6, COX18, COX20, SCO1 and SCO2. Interacts with TMEM177 in a COX20-dependent manner. Interacts with COX20. Interacts with COX16. It depends on Cu cation as a cofactor.

The protein localises to the mitochondrion inner membrane. It carries out the reaction 4 Fe(II)-[cytochrome c] + O2 + 8 H(+)(in) = 4 Fe(III)-[cytochrome c] + 2 H2O + 4 H(+)(out). Its function is as follows. Component of the cytochrome c oxidase, the last enzyme in the mitochondrial electron transport chain which drives oxidative phosphorylation. The respiratory chain contains 3 multisubunit complexes succinate dehydrogenase (complex II, CII), ubiquinol-cytochrome c oxidoreductase (cytochrome b-c1 complex, complex III, CIII) and cytochrome c oxidase (complex IV, CIV), that cooperate to transfer electrons derived from NADH and succinate to molecular oxygen, creating an electrochemical gradient over the inner membrane that drives transmembrane transport and the ATP synthase. Cytochrome c oxidase is the component of the respiratory chain that catalyzes the reduction of oxygen to water. Electrons originating from reduced cytochrome c in the intermembrane space (IMS) are transferred via the dinuclear copper A center (CU(A)) of subunit 2 and heme A of subunit 1 to the active site in subunit 1, a binuclear center (BNC) formed by heme A3 and copper B (CU(B)). The BNC reduces molecular oxygen to 2 water molecules using 4 electrons from cytochrome c in the IMS and 4 protons from the mitochondrial matrix. This is Cytochrome c oxidase subunit 2 (MT-CO2) from Anisomys imitator (Uneven-toothed rat).